The primary structure comprises 529 residues: MGLSHKERREYGRSYKRDNNRTAPFSCWPRWIRPGGWSGHGGMSGTTRTGVTARLAFWGGWLSPCLSRAGEKPSCVRTSTRTQIITCCSRLTCSGLPGARAGWLSGLCWRGSGVLLLDGHFAAADEAVNRKLNRRAGAQPATGEMTDVRQPAFRGAGTVNALARFFHGRGPETAGVFLGKDEQGEPVLVPRDTWRKTNIQILGLPGSGKSVMATNALIRSVRDFGDAVVYFDQRGPVAALLPAHCPNFTLLDLRPGKPAQLNLFRDLDQYALKNLLVAGFNLSETGHVADHYRISEQKAAKLIAEQVSAGGKHSAGAGGGVRAAGGPEKGREGADHQAGERGRPERPADGQRHRRGGDNQRRRLLYVIGSMDDEAVIRVQKMLFARCAQIIIARDEFRRWPHASIMLDEIKYLLSKYVLNALGTVRSRDCNLRLAHHAGRLRAAGQDLPADFVKTTVLDNTPIRWFYRAASQESRSGAGQTGEIRVDVERRGPAGRRGTWSISAGTASSRRSRPLFDVNTLQHLLTGSR.

Residues 311–356 (GKHSAGAGGGVRAAGGPEKGREGADHQAGERGRPERPADGQRHRRG) form a disordered region. The span at 328–356 (EKGREGADHQAGERGRPERPADGQRHRRG) shows a compositional bias: basic and acidic residues.

This protein is essential to promote the specific transfer of the plasmid in the presence of conjugative plasmids. In Escherichia coli, this protein is Mobilization protein A (mobA).